A 643-amino-acid chain; its full sequence is E3 ubiquitin-protein ligase AMFR (643 aa).

6 helical membrane-spanning segments follow: residues 82–102 (LFVW…AKLI), 122–142 (FWNF…VQTV), 186–206 (VLSL…VCCV), 215–235 (TLAF…HVIL), 254–274 (GTYV…LDLM), and 276–296 (HIHM…VIFM). The segment at 341-379 (CAICWDSMQAARKLPCGHLFHNSCLRSWLEQDTSCPTCR) adopts an RING-type zinc-finger fold. A helical membrane pass occupies residues 429-449 (IASWLPSFSVEVMHTTNILGI). Residues 456 to 498 (QLNAMAHQIQEMFPQVPYHLVLQDLQMTRSVEITTDNILEGRI) form the CUE domain. The interval 504–535 (TQRSDSLRPALNSPVERPSPDLEEGEASVQTE) is disordered. Ser-516 and Ser-542 each carry phosphoserine. A disordered region spans residues 598–624 (LNKSSEDDGASERLLPSEGTSSDPVTL). The VCP/p97-interacting motif (VIM) stretch occupies residues 622–640 (VTLRRRMLAAAAERRLQRQ).

As to quaternary structure, interacts with RNF5. Also forms an ERAD complex containing VCP/p97, NGLY1; PSMC1; SAKS1 and RAD23B required for coupling retrotranslocation, ubiquitination and deglycosylation. Interacts with DERL1. Interacts (through a region distinct from the RING finger) with UBE2G2/UBC7. Component of the VCP/p97-AMFR/gp78 complex that enhances VCP/p97 binding to polyubiquitinated proteins for their degradation by the endoplasmic reticulum-associated degradation (ERAD) pathway. Interacts (via the VIM) with VCP/p97. Interacts (via its membrane domain) with INSIG1; the interaction initiates the sterol-mediated ubiquitination and degradation of HMGCR by the ERAD pathway. Interacts with AUP1, UBE2G2 and RNF139/TRC8; interaction with AUP1 facilitates interaction of AMFR with ubiquitin-conjugating enzyme UBE2G2 and ubiquitin ligase RNF139, leading to sterol-induced ubiquitination of HNGCR and its subsequent proteasomal degradation. Interacts with BAG6. Interacts with USP13 (via UBA 2 domain); the interaction is direct. Interacts with LMBR1L, UBAC2 and CTNNB1. Interacts with C18orf32. Palmitoylation of the RING-type zing finger by ZDHHC6 promotes localization to the peripheral endoplasmic reticulum. In terms of tissue distribution, expressed in heart, brain, liver, lung, skeletal muscle, kidney and testis. Not detected in spleen.

Its subcellular location is the endoplasmic reticulum membrane. It catalyses the reaction [E2 ubiquitin-conjugating enzyme]-S-ubiquitinyl-L-cysteine + [acceptor protein]-L-cysteine = [E2 ubiquitin-conjugating enzyme]-L-cysteine + [acceptor protein]-S-ubiquitinyl-L-cysteine.. Its pathway is protein modification; protein ubiquitination. In terms of biological role, E3 ubiquitin-protein ligase that mediates the polyubiquitination of lysine and cysteine residues on target proteins, such as CD3D, CYP3A4, CFTR, INSIG1, SOAT2/ACAT2 and APOB for proteasomal degradation. Component of a VCP/p97-AMFR/gp78 complex that participates in the final step of endoplasmic reticulum-associated degradation (ERAD). The VCP/p97-AMFR/gp78 complex is involved in the sterol-accelerated ERAD degradation of HMGCR through binding to the HMGCR-INSIG1 complex at the ER membrane. In addition, interaction of AMFR with AUP1 facilitates interaction of AMFR with ubiquitin-conjugating enzyme UBE2G2 and ubiquitin ligase RNF139, leading to sterol-induced HMGCR ubiquitination. The ubiquitinated HMGCR is then released from the ER by the complex into the cytosol for subsequent destruction. In addition to ubiquitination on lysine residues, catalyzes ubiquitination on cysteine residues: together with INSIG1, mediates polyubiquitination of SOAT2/ACAT2 at 'Cys-277', leading to its degradation when the lipid levels are low. Catalyzes ubiquitination and subsequent degradation of INSIG1 when cells are depleted of sterols. Mediates polyubiquitination of INSIG2 at 'Cys-215' in some tissues, leading to its degradation. Also regulates ERAD through the ubiquitination of UBL4A a component of the BAG6/BAT3 complex. Also acts as a scaffold protein to assemble a complex that couples ubiquitination, retranslocation and deglycosylation. Mediates tumor invasion and metastasis as a receptor for the GPI/autocrine motility factor. In association with LMBR1L and UBAC2, negatively regulates the canonical Wnt signaling pathway in the lymphocytes by promoting the ubiquitin-mediated degradation of CTNNB1 and Wnt receptors FZD6 and LRP6. Regulates NF-kappa-B and MAPK signaling pathways by mediating 'Lys-27'-linked polyubiquitination of TAB3 and promoting subsequent TAK1/MAP3K7 activation. The chain is E3 ubiquitin-protein ligase AMFR (Amfr) from Mus musculus (Mouse).